The chain runs to 573 residues: ESX-1 secretion system protein EccA1 (573 aa).

An ATP-binding site is contributed by 334–341 (GPPGTGKT).

Belongs to the CbxX/CfxQ family. As to quaternary structure, part of the ESX-1 / type VII secretion system (T7SS), which is composed of cytosolic and membrane components.

It is found in the cytoplasm. Part of the ESX-1 specialized secretion system, which delivers several virulence factors to host cells during infection, including the key virulence factors EsxA (ESAT-6) and EsxB (CFP-10). EccA1 exhibits ATPase activity and may provide energy for the export of ESX-1 substrates. In Mycobacterium tuberculosis (strain CDC 1551 / Oshkosh), this protein is ESX-1 secretion system protein EccA1.